The following is an 889-amino-acid chain: DNA mismatch repair protein MutS (889 aa).

An ATP-binding site is contributed by 622–629 (GPNMAGKS). Residues 869–889 (QRVKRPEKAPADVTAETEDQE) form a disordered region.

This sequence belongs to the DNA mismatch repair MutS family.

This protein is involved in the repair of mismatches in DNA. It is possible that it carries out the mismatch recognition step. This protein has a weak ATPase activity. This Desulfatibacillum aliphaticivorans protein is DNA mismatch repair protein MutS.